We begin with the raw amino-acid sequence, 417 residues long: MFTKAMNIADFDNELAQAIADEATRQEDHIELIASENYCSPRVMEAQGSCLTNKYAEGYPRKRYYGGCEYVDIVEELAIARVKMLFAADYANVQPHSGSQANAAVFLALLEPGDTVLGMDLDHGGHLTHGSKVSFSGKTYNSIGYGIDDKGLIDYDAVAQLAEKHRPKMIIAGFSAYSQVLDFQRFREIADSVGAYLMVDMAHVAGLVAAGLYPNPVPFADVVTSTTHKTLRGPRGGIILAKANPTIEKKLNSAIFPGSQGGPLMHVIAAKAVAFKEALEPSFQKYQEQVVENAKTMAKVFIARGYDIVSGGTQNHLMLVSLINKGLTGKAANDALSRAHITVNKNSVPNDPQSPFVTSGIRIGTPAITTRGFGVNEVKKVANWICDVLDDIDNEEVILNVRNKVAELCAEFPVYGQ.

Residues leucine 121 and 125–127 (GHL) contribute to the (6S)-5,6,7,8-tetrahydrofolate site. Position 229 is an N6-(pyridoxal phosphate)lysine (lysine 229). Residue 354–356 (SPF) coordinates (6S)-5,6,7,8-tetrahydrofolate.

Belongs to the SHMT family. Homodimer. Pyridoxal 5'-phosphate is required as a cofactor.

It localises to the cytoplasm. The catalysed reaction is (6R)-5,10-methylene-5,6,7,8-tetrahydrofolate + glycine + H2O = (6S)-5,6,7,8-tetrahydrofolate + L-serine. Its pathway is one-carbon metabolism; tetrahydrofolate interconversion. It functions in the pathway amino-acid biosynthesis; glycine biosynthesis; glycine from L-serine: step 1/1. Functionally, catalyzes the reversible interconversion of serine and glycine with tetrahydrofolate (THF) serving as the one-carbon carrier. This reaction serves as the major source of one-carbon groups required for the biosynthesis of purines, thymidylate, methionine, and other important biomolecules. Also exhibits THF-independent aldolase activity toward beta-hydroxyamino acids, producing glycine and aldehydes, via a retro-aldol mechanism. The polypeptide is Serine hydroxymethyltransferase (Dichelobacter nodosus (strain VCS1703A)).